A 1485-amino-acid polypeptide reads, in one-letter code: Dicer-like protein 2 (1485 aa).

The span at 1-11 (MSSQDESASSS) shows a compositional bias: low complexity. Positions 1-61 (MSSQDESASS…EPQPSGNGPR (61 aa)) are disordered. The region spanning 72-250 (MFQASMQQNI…MEDLESSLDS (179 aa)) is the Helicase ATP-binding domain. 85 to 92 (MDTGSGKT) is an ATP binding site. Residues 193–196 (DEAH) carry the DEAH box motif. Residues 415-579 (KLQVLLRILR…RYENDMRELD (165 aa)) enclose the Helicase C-terminal domain. The Dicer dsRNA-binding fold domain occupies 609–712 (AKGHLEHFCR…LPIRESDFVD (104 aa)). RNase III domains follow at residues 988-1127 (AQEL…IEGG) and 1168-1358 (LGPL…VDSG). Mg(2+)-binding residues include Glu1208, Asp1344, and Glu1347. The DRBM domain maps to 1388 to 1469 (HPKEELGRVA…ALEVIRVWEE (82 aa)).

Belongs to the helicase family. Dicer subfamily. The cofactor is Mg(2+). Requires Mn(2+) as cofactor.

Its function is as follows. Dicer-like endonuclease involved in cleaving double-stranded RNA in the RNA interference (RNAi) pathway. Produces 21 to 25 bp dsRNAs (siRNAs) which target the selective destruction of homologous RNAs leading to sequence-specific suppression of gene expression, called post-transcriptional gene silencing (PTGS). Part of a broad host defense response against viral infection and transposons. The polypeptide is Dicer-like protein 2 (DCL2) (Pyricularia oryzae (strain 70-15 / ATCC MYA-4617 / FGSC 8958) (Rice blast fungus)).